The following is a 189-amino-acid chain: UPF0301 protein PST_3956 (189 aa).

The protein belongs to the UPF0301 (AlgH) family.

The chain is UPF0301 protein PST_3956 from Stutzerimonas stutzeri (strain A1501) (Pseudomonas stutzeri).